The primary structure comprises 471 residues: Putative multidrug resistance protein MdtD (471 aa).

Residues 1–11 are Periplasmic-facing; the sequence is MTDLPDSTRWQ. Residues 12 to 32 form a helical membrane-spanning segment; the sequence is LWIVAFGFFMQSLDTTIVNTA. Residues 33-48 are Cytoplasmic-facing; it reads LPSMAQSLGESPLHMH. A helical transmembrane segment spans residues 49-69; sequence MVIVSYVLTVAVMLPASGWLA. Over 70–76 the chain is Periplasmic; sequence DKVGVRN. The chain crosses the membrane as a helical span at residues 77 to 97; it reads IFFTAIVLFTLGSLFCALSGT. At 98 to 101 the chain is on the cytoplasmic side; sequence LNEL. The helical transmembrane segment at 102 to 124 threads the bilayer; it reads LLARALQGVGGAMMVPVGRLTVM. Topologically, residues 125–137 are periplasmic; sequence KIVPREQYMAAMT. A helical membrane pass occupies residues 138–158; that stretch reads FVTLPGQVGPLLGPALGGLLV. Over 159 to 164 the chain is Cytoplasmic; the sequence is EYASWH. The helical transmembrane segment at 165 to 185 threads the bilayer; sequence WIFLINIPVGIIGAIATLMLM. Topologically, residues 186-196 are periplasmic; it reads PNYTMQTRRFD. The chain crosses the membrane as a helical span at residues 197-217; it reads LSGFLLLAVGMAVLTLALDGS. The Cytoplasmic segment spans residues 218 to 224; the sequence is KGTGLSP. A helical transmembrane segment spans residues 225 to 245; it reads LAITGLVAVGVVALVLYLLHA. Topologically, residues 246–262 are periplasmic; the sequence is RNNHRALFSLKLFRTRT. A helical transmembrane segment spans residues 263–283; that stretch reads FSLGLAGSFAGRIGSGMLPFM. At 284–285 the chain is on the cytoplasmic side; the sequence is TP. Residues 286 to 306 traverse the membrane as a helical segment; that stretch reads VFLQIGLGFSPFHAGLMMIPM. Residues 307-341 lie on the Periplasmic side of the membrane; that stretch reads VLGSMGMKRIVVQVVNRFGYRRVLVATTLGLSLVT. A helical membrane pass occupies residues 342–362; that stretch reads LLFMTTALLGWYYVLPFVLFL. At 363–395 the chain is on the cytoplasmic side; the sequence is QGMVNSTRFSSMNTLTLKDLPDNLASSGNSLLS. Residues 396 to 416 traverse the membrane as a helical segment; sequence MIMQLSMSIGVTIAGLLLGLF. Topologically, residues 417–430 are periplasmic; sequence GSQHVSVDSGTTQT. A helical membrane pass occupies residues 431-451; the sequence is VFMYTWLSMAFIIALPAFIFA. At 452–471 the chain is on the cytoplasmic side; it reads RVPNDTHQNVAISRRKRSAQ.

It belongs to the major facilitator superfamily. TCR/Tet family.

It is found in the cell inner membrane. In Escherichia coli O127:H6 (strain E2348/69 / EPEC), this protein is Putative multidrug resistance protein MdtD.